A 696-amino-acid polypeptide reads, in one-letter code: Polyribonucleotide nucleotidyltransferase (696 aa).

Asp489 and Asp495 together coordinate Mg(2+). Residues 556–615 (PQYVTMKINPEKIRDVIGKGGVVIREITEATNCAIDISDDGTIKIAAHTTEEGEAAKRRI) enclose the KH domain. Residues 625–693 (GKVYEGTVVK…RQGRVRLSMK (69 aa)) enclose the S1 motif domain.

Belongs to the polyribonucleotide nucleotidyltransferase family. In terms of assembly, component of the RNA degradosome, which is a multiprotein complex involved in RNA processing and mRNA degradation. It depends on Mg(2+) as a cofactor.

The protein resides in the cytoplasm. The catalysed reaction is RNA(n+1) + phosphate = RNA(n) + a ribonucleoside 5'-diphosphate. In terms of biological role, involved in mRNA degradation. Catalyzes the phosphorolysis of single-stranded polyribonucleotides processively in the 3'- to 5'-direction. The chain is Polyribonucleotide nucleotidyltransferase from Coxiella burnetii (strain CbuK_Q154) (Coxiella burnetii (strain Q154)).